Consider the following 199-residue polypeptide: Histone deacetylase complex subunit SAP25 (199 aa).

Composition is skewed to polar residues over residues 151 to 163 (QMSQGEPRPSSSA) and 184 to 199 (QGADLSLPQTPDTHCP). The tract at residues 151–199 (QMSQGEPRPSSSAVGPPDHTSDPPSPCGSPSSSQGADLSLPQTPDTHCP) is disordered.

As to quaternary structure, may be a component of the mSIN3A corepressor complex. Interacts with SIN3A. Interacts with HDAC2.

The protein localises to the nucleus. Its subcellular location is the cytoplasm. Functionally, involved in the transcriptional repression mediated by the mSIN3A but not the N-CoR corepressor complex. The protein is Histone deacetylase complex subunit SAP25 (SAP25) of Homo sapiens (Human).